The following is a 326-amino-acid chain: Methionyl-tRNA formyltransferase (326 aa).

Residue 110–113 participates in (6S)-5,6,7,8-tetrahydrofolate binding; sequence SLLP. Positions 307-326 are disordered; it reads VGTRFSPPEAPQREPAPGEA.

Belongs to the Fmt family.

It catalyses the reaction L-methionyl-tRNA(fMet) + (6R)-10-formyltetrahydrofolate = N-formyl-L-methionyl-tRNA(fMet) + (6S)-5,6,7,8-tetrahydrofolate + H(+). Attaches a formyl group to the free amino group of methionyl-tRNA(fMet). The formyl group appears to play a dual role in the initiator identity of N-formylmethionyl-tRNA by promoting its recognition by IF2 and preventing the misappropriation of this tRNA by the elongation apparatus. The sequence is that of Methionyl-tRNA formyltransferase from Symbiobacterium thermophilum (strain DSM 24528 / JCM 14929 / IAM 14863 / T).